The chain runs to 357 residues: UDP-N-acetylglucosamine--N-acetylmuramyl-(pentapeptide) pyrophosphoryl-undecaprenol N-acetylglucosamine transferase (357 aa).

UDP-N-acetyl-alpha-D-glucosamine is bound by residues 14-16 (TGG), Asn-120, Arg-164, Ser-194, and Gln-291.

This sequence belongs to the glycosyltransferase 28 family. MurG subfamily.

Its subcellular location is the cell inner membrane. It carries out the reaction di-trans,octa-cis-undecaprenyl diphospho-N-acetyl-alpha-D-muramoyl-L-alanyl-D-glutamyl-meso-2,6-diaminopimeloyl-D-alanyl-D-alanine + UDP-N-acetyl-alpha-D-glucosamine = di-trans,octa-cis-undecaprenyl diphospho-[N-acetyl-alpha-D-glucosaminyl-(1-&gt;4)]-N-acetyl-alpha-D-muramoyl-L-alanyl-D-glutamyl-meso-2,6-diaminopimeloyl-D-alanyl-D-alanine + UDP + H(+). The protein operates within cell wall biogenesis; peptidoglycan biosynthesis. Functionally, cell wall formation. Catalyzes the transfer of a GlcNAc subunit on undecaprenyl-pyrophosphoryl-MurNAc-pentapeptide (lipid intermediate I) to form undecaprenyl-pyrophosphoryl-MurNAc-(pentapeptide)GlcNAc (lipid intermediate II). The polypeptide is UDP-N-acetylglucosamine--N-acetylmuramyl-(pentapeptide) pyrophosphoryl-undecaprenol N-acetylglucosamine transferase (Fusobacterium nucleatum subsp. nucleatum (strain ATCC 25586 / DSM 15643 / BCRC 10681 / CIP 101130 / JCM 8532 / KCTC 2640 / LMG 13131 / VPI 4355)).